We begin with the raw amino-acid sequence, 404 residues long: NADH-quinone oxidoreductase subunit D (404 aa).

It belongs to the complex I 49 kDa subunit family. In terms of assembly, NDH-1 is composed of 14 different subunits. Subunits NuoB, C, D, E, F, and G constitute the peripheral sector of the complex.

It is found in the cell inner membrane. The catalysed reaction is a quinone + NADH + 5 H(+)(in) = a quinol + NAD(+) + 4 H(+)(out). Functionally, NDH-1 shuttles electrons from NADH, via FMN and iron-sulfur (Fe-S) centers, to quinones in the respiratory chain. The immediate electron acceptor for the enzyme in this species is believed to be ubiquinone. Couples the redox reaction to proton translocation (for every two electrons transferred, four hydrogen ions are translocated across the cytoplasmic membrane), and thus conserves the redox energy in a proton gradient. This chain is NADH-quinone oxidoreductase subunit D, found in Leptospira borgpetersenii serovar Hardjo-bovis (strain JB197).